The following is a 90-amino-acid chain: Probable Fe(2+)-trafficking protein (90 aa).

Belongs to the Fe(2+)-trafficking protein family.

Its function is as follows. Could be a mediator in iron transactions between iron acquisition and iron-requiring processes, such as synthesis and/or repair of Fe-S clusters in biosynthetic enzymes. This chain is Probable Fe(2+)-trafficking protein, found in Saccharophagus degradans (strain 2-40 / ATCC 43961 / DSM 17024).